Reading from the N-terminus, the 261-residue chain is NAD-capped RNA hydrolase NudC (261 aa).

Positions 25 and 69 each coordinate substrate. Cys98 and Cys101 together coordinate Zn(2+). Glu111 lines the substrate pocket. 2 residues coordinate Zn(2+): Cys116 and Cys119. Residue Tyr124 coordinates substrate. A Nudix hydrolase domain is found at 125–248 (PQIAPCVIVA…TVARRLIEDT (124 aa)). A divalent metal cation-binding residues include Ala158, Glu174, and Glu178. A Nudix box motif is present at residues 159 to 180 (GFVEVGETLEQAVSREVLEESN). A substrate-binding site is contributed by 192–199 (QPWPFPHS). Glu219 contributes to the a divalent metal cation binding site. Ala241 serves as a coordination point for substrate.

It belongs to the Nudix hydrolase family. NudC subfamily. In terms of assembly, homodimer. The cofactor is Mg(2+). Mn(2+) is required as a cofactor. It depends on Zn(2+) as a cofactor.

The catalysed reaction is a 5'-end NAD(+)-phospho-ribonucleoside in mRNA + H2O = a 5'-end phospho-adenosine-phospho-ribonucleoside in mRNA + beta-nicotinamide D-ribonucleotide + 2 H(+). The enzyme catalyses NAD(+) + H2O = beta-nicotinamide D-ribonucleotide + AMP + 2 H(+). It catalyses the reaction NADH + H2O = reduced beta-nicotinamide D-ribonucleotide + AMP + 2 H(+). Its function is as follows. mRNA decapping enzyme that specifically removes the nicotinamide adenine dinucleotide (NAD) cap from a subset of mRNAs by hydrolyzing the diphosphate linkage to produce nicotinamide mononucleotide (NMN) and 5' monophosphate mRNA. The NAD-cap is present at the 5'-end of some mRNAs and stabilizes RNA against 5'-processing. Has preference for mRNAs with a 5'-end purine. Catalyzes the hydrolysis of a broad range of dinucleotide pyrophosphates. The polypeptide is NAD-capped RNA hydrolase NudC (Yersinia enterocolitica serotype O:8 / biotype 1B (strain NCTC 13174 / 8081)).